A 145-amino-acid chain; its full sequence is Superoxide dismutase [Mn/Fe] (145 aa).

Histidine 10 and histidine 64 together coordinate Fe(3+). Mn(2+) contacts are provided by histidine 10 and histidine 64. Residues 126–145 (TSTANQDTPISEGKKPILGL) form a disordered region.

This sequence belongs to the iron/manganese superoxide dismutase family. Mn(2+) is required as a cofactor. Fe(3+) serves as cofactor.

The enzyme catalyses 2 superoxide + 2 H(+) = H2O2 + O2. Destroys superoxide anion radicals which are normally produced within the cells and which are toxic to biological systems. Catalyzes the dismutation of superoxide anion radicals into O2 and H2O2 by successive reduction and oxidation of the transition metal ion at the active site. The protein is Superoxide dismutase [Mn/Fe] (sodA) of Streptococcus mitis.